Reading from the N-terminus, the 504-residue chain is Sucrose phosphorylase (504 aa).

Residue aspartate 50 participates in substrate binding. Residues histidine 88, 190–192 (RLD), glutamate 232, 289–290 (HD), 342–345 (DLYQ), and arginine 399 each bind sucrose. Aspartate 192 (nucleophile) is an active-site residue. The active-site Proton donor is glutamate 232.

The protein belongs to the glycosyl hydrolase 13 family. Sucrose phosphorylase subfamily. In terms of assembly, homodimer.

It catalyses the reaction sucrose + phosphate = D-fructose + alpha-D-glucose 1-phosphate. Functionally, catalyzes the reversible phosphorolysis of sucrose into alpha-D-glucose 1-phosphate (Glc1P) and D-fructose. Is involved in sucrose degradation. Also displays transglucosylation activity in vitro, by transferring the glucosyl moiety of Glc1P to a broad range of monomeric sugars, such as D- and L-arabinose, D- and L-arabitol, and xylitol. The sequence is that of Sucrose phosphorylase from Bifidobacterium adolescentis (strain ATCC 15703 / DSM 20083 / NCTC 11814 / E194a).